A 274-amino-acid polypeptide reads, in one-letter code: Undecaprenyl-diphosphatase (274 aa).

The next 8 helical transmembrane spans lie at 4–24 (LLVI…LLPI), 46–66 (VVFE…EYRV), 86–106 (INVA…SDFI), 109–129 (VLFS…IIMW), 145–165 (ISYA…IPGT), 188–208 (FSFF…LWEA), 214–234 (IEDM…TFAV), and 250–270 (FAWY…TGVI).

This sequence belongs to the UppP family.

Its subcellular location is the cell inner membrane. The enzyme catalyses di-trans,octa-cis-undecaprenyl diphosphate + H2O = di-trans,octa-cis-undecaprenyl phosphate + phosphate + H(+). In terms of biological role, catalyzes the dephosphorylation of undecaprenyl diphosphate (UPP). Confers resistance to bacitracin. This chain is Undecaprenyl-diphosphatase, found in Cellvibrio japonicus (strain Ueda107) (Pseudomonas fluorescens subsp. cellulosa).